A 299-amino-acid chain; its full sequence is N-acetylmuramic acid 6-phosphate etherase (299 aa).

Positions 54–217 constitute an SIS domain; it reads TIAQYKKGGR…STITMVGVGK (164 aa). Glu82 functions as the Proton donor in the catalytic mechanism. The active site involves Glu113.

Belongs to the GCKR-like family. MurNAc-6-P etherase subfamily. Homodimer.

It carries out the reaction N-acetyl-D-muramate 6-phosphate + H2O = N-acetyl-D-glucosamine 6-phosphate + (R)-lactate. It functions in the pathway amino-sugar metabolism; N-acetylmuramate degradation. Functionally, specifically catalyzes the cleavage of the D-lactyl ether substituent of MurNAc 6-phosphate, producing GlcNAc 6-phosphate and D-lactate. In Staphylococcus aureus (strain bovine RF122 / ET3-1), this protein is N-acetylmuramic acid 6-phosphate etherase.